A 414-amino-acid polypeptide reads, in one-letter code: Isocitrate dehydrogenase [NADP] cytoplasmic (414 aa).

Serine 2 is subject to N-acetylserine. A Phosphotyrosine modification is found at tyrosine 42. Threonine 75–threonine 77 is an NADP(+) binding site. Threonine 77 provides a ligand contact to substrate. Residue lysine 81 is modified to N6-acetyllysine. Arginine 82 is a binding site for NADP(+). Substrate is bound by residues serine 94–arginine 100 and arginine 109. Lysine 126 is modified (N6-succinyllysine). Arginine 132 and lysine 212 together coordinate substrate. An N6-acetyllysine mark is found at lysine 224, lysine 233, and lysine 243. Aspartate 252 lines the Mn(2+) pocket. Lysine 260 contacts NADP(+). Aspartate 275 and aspartate 279 together coordinate Mn(2+). Position 310–315 (glycine 310–histidine 315) interacts with NADP(+). The residue at position 321 (lysine 321) is an N6-acetyllysine. Position 328 (asparagine 328) interacts with NADP(+). Position 389 is a phosphoserine (serine 389). Lysine 400 carries the post-translational modification N6-succinyllysine.

This sequence belongs to the isocitrate and isopropylmalate dehydrogenases family. Homodimer. Mg(2+) serves as cofactor. Mn(2+) is required as a cofactor. Acetylation at Lys-374 dramatically reduces catalytic activity.

Its subcellular location is the cytoplasm. It localises to the cytosol. It carries out the reaction D-threo-isocitrate + NADP(+) = 2-oxoglutarate + CO2 + NADPH. Functionally, catalyzes the NADP(+)-dependent oxidative decarboxylation of isocitrate (D-threo-isocitrate) to 2-ketoglutarate (2-oxoglutarate), which is required by other enzymes such as the phytanoyl-CoA dioxygenase. Plays a critical role in the generation of NADPH, an important cofactor in many biosynthesis pathways. May act as a corneal epithelial crystallin and may be involved in maintaining corneal epithelial transparency. The chain is Isocitrate dehydrogenase [NADP] cytoplasmic (IDH1) from Pongo abelii (Sumatran orangutan).